Here is a 472-residue protein sequence, read N- to C-terminus: Proline--tRNA ligase (472 aa).

Belongs to the class-II aminoacyl-tRNA synthetase family. ProS type 3 subfamily. As to quaternary structure, homodimer.

The protein resides in the cytoplasm. The enzyme catalyses tRNA(Pro) + L-proline + ATP = L-prolyl-tRNA(Pro) + AMP + diphosphate. Its function is as follows. Catalyzes the attachment of proline to tRNA(Pro) in a two-step reaction: proline is first activated by ATP to form Pro-AMP and then transferred to the acceptor end of tRNA(Pro). This is Proline--tRNA ligase from Ureaplasma urealyticum serovar 10 (strain ATCC 33699 / Western).